A 78-amino-acid chain; its full sequence is Large ribosomal subunit protein uL24 (78 aa).

A disordered region spans residues 52-78; the sequence is PSEKTPNGGHVNKEMPIDISNVAKVEG.

This sequence belongs to the universal ribosomal protein uL24 family. In terms of assembly, part of the 50S ribosomal subunit.

Its function is as follows. One of two assembly initiator proteins, it binds directly to the 5'-end of the 23S rRNA, where it nucleates assembly of the 50S subunit. One of the proteins that surrounds the polypeptide exit tunnel on the outside of the subunit. This Campylobacter concisus (strain 13826) protein is Large ribosomal subunit protein uL24.